Consider the following 263-residue polypeptide: UPF0246 protein Strop_2927 (263 aa).

It belongs to the UPF0246 family.

The protein is UPF0246 protein Strop_2927 of Salinispora tropica (strain ATCC BAA-916 / DSM 44818 / JCM 13857 / NBRC 105044 / CNB-440).